A 205-amino-acid chain; its full sequence is Large ribosomal subunit protein uL3 (205 aa).

It belongs to the universal ribosomal protein uL3 family. As to quaternary structure, part of the 50S ribosomal subunit. Forms a cluster with proteins L14 and L19.

Its function is as follows. One of the primary rRNA binding proteins, it binds directly near the 3'-end of the 23S rRNA, where it nucleates assembly of the 50S subunit. The protein is Large ribosomal subunit protein uL3 of Bacteroides fragilis (strain ATCC 25285 / DSM 2151 / CCUG 4856 / JCM 11019 / LMG 10263 / NCTC 9343 / Onslow / VPI 2553 / EN-2).